The chain runs to 205 residues: ATP-dependent Clp protease proteolytic subunit (205 aa).

Ser-108 acts as the Nucleophile in catalysis. His-133 is an active-site residue.

Belongs to the peptidase S14 family. Fourteen ClpP subunits assemble into 2 heptameric rings which stack back to back to give a disk-like structure with a central cavity, resembling the structure of eukaryotic proteasomes.

The protein localises to the cytoplasm. It catalyses the reaction Hydrolysis of proteins to small peptides in the presence of ATP and magnesium. alpha-casein is the usual test substrate. In the absence of ATP, only oligopeptides shorter than five residues are hydrolyzed (such as succinyl-Leu-Tyr-|-NHMec, and Leu-Tyr-Leu-|-Tyr-Trp, in which cleavage of the -Tyr-|-Leu- and -Tyr-|-Trp bonds also occurs).. In terms of biological role, cleaves peptides in various proteins in a process that requires ATP hydrolysis. Has a chymotrypsin-like activity. Plays a major role in the degradation of misfolded proteins. The polypeptide is ATP-dependent Clp protease proteolytic subunit (Alcanivorax borkumensis (strain ATCC 700651 / DSM 11573 / NCIMB 13689 / SK2)).